Reading from the N-terminus, the 101-residue chain is Small ribosomal subunit protein uS14 (101 aa).

Positions 33 to 69 (SQDASYEEKIDASTKLQKLPRDSSPSRHRNRCELSGR) are disordered. Positions 51 to 68 (LPRDSSPSRHRNRCELSG) are enriched in basic and acidic residues.

This sequence belongs to the universal ribosomal protein uS14 family. As to quaternary structure, part of the 30S ribosomal subunit. Contacts proteins S3 and S10.

Its function is as follows. Binds 16S rRNA, required for the assembly of 30S particles and may also be responsible for determining the conformation of the 16S rRNA at the A site. This is Small ribosomal subunit protein uS14 from Xanthomonas axonopodis pv. citri (strain 306).